Consider the following 598-residue polypeptide: Major royal jelly protein 5 (598 aa).

The signal sequence occupies residues 1-17 (MTTWLLLVVCLGIACQG). Asparagine 148, asparagine 164, asparagine 181, and asparagine 324 each carry an N-linked (GlcNAc...) asparagine glycan.

Belongs to the major royal jelly protein family. In terms of tissue distribution, found in and secreted from the hypopharyngeal glands of the worker honey bee (at protein level); expression peaks at 8 days post eclosion. Expressed in the brains of adult worker bees peaking at 12 days post eclosion (at protein level). Expressed in the spermatheca of adult queen bees (at protein level); Expression levels are higher in mated queens than in virgin queens. Expressed in the heads of worker bees after eclosion, expression dropping with age and detectable up to 26 days of age.

It localises to the secreted. Its function is as follows. Component of royal jelly, a substance produced in the hypopharyngeal gland containing proteins, free amino acids, fatty acids, sugars and other nutrients, which is fed to developing larvae by worker nurse bees. Major royal jelly proteins (MRJPs) are high in essential amino acids and probably have a nutritional function in larval food. All larvae are fed some royal jelly (also known as worker jelly) early in their development but it forms the principal source of nutrition for larvae destined to become queen bees. Produced in the spermatheca of adult queen bees, along with other major royal jelly proteins, where it may act as a nutrient supply for sperm stored by mated queens, or be involved in energy metabolism. The chain is Major royal jelly protein 5 from Apis mellifera (Honeybee).